A 962-amino-acid polypeptide reads, in one-letter code: Spliceosome associated factor 3, U4/U6 recycling protein (962 aa).

The span at 1–21 (MATTAASSASEPEVEPQAGPE) shows a compositional bias: low complexity. Positions 1–92 (MATTAASSAS…EDEWEYDEEE (92 aa)) are disordered. N-acetylalanine is present on alanine 2. The mediates interaction with PRPF3 stretch occupies residues 2–352 (ATTAASSASE…LVPDLWIRYS (351 aa)). Serine 10 is subject to Phosphoserine. Acidic residues predominate over residues 81–92 (AGEDEWEYDEEE). HAT repeat units lie at residues 127–159 (GELSRVRAARQKMSELFPLTEELWLEWLHDEIS), 165–196 (LDREHVYELFERAVKDYICPNIWLEYGQYSVG), 202–238 (GGLEKVRSVFERALSSVGLHMTKGLAIWEAYREFESA), 243–276 (ARLEKVHSLFRRQLAIPLYEMEATFAEYEEWSEE), 325–357 (GDPARIQLIFERALVENCLVPDLWIRYSQYLDR), 360–392 (KVKDLVLSVHSRAVRNCPWTVALWSRYLLAMER), 395–431 (LDHQTISATFENALSAGFIQATDYVEIWQVYLDYLRR), 441–474 (KELEELRSMFTRALEYLQQEVEERFSESGDPSCL), and 488–521 (NNMQKARELWDSIMTRGNAKYANMWLEYYNLERA). Serine 216 carries the phosphoserine modification. The segment at 488 to 521 (NNMQKARELWDSIMTRGNAKYANMWLEYYNLERA) is required for interaction with USP4. The tract at residues 538–952 (CTSDYPEHVC…VATEAPKMSN (415 aa)) is necessary and sufficient for U6 snRNA binding. Positions 559 to 618 (TLEDWDLAIQKTETRLARVNEQRMKAAEKEAALVQQEEEKAEQRKKVRAEKKALKKKKKT) form a coiled coil. Positions 591–602 (LVQQEEEKAEQR) are enriched in basic and acidic residues. A disordered region spans residues 591–696 (LVQQEEEKAE…SLKRDMPKVA (106 aa)). The interval 601–670 (QRKKVRAEKK…KEETELSGKC (70 aa)) is required for nuclear localization. The short motif at 602 to 609 (RKKVRAEK) is the Nuclear localization signal element. The segment covering 603–618 (KKVRAEKKALKKKKKT) has biased composition (basic residues). Residues 627–640 (DEDEENEWGEEEEE) are compositionally biased toward acidic residues. Position 651 is a phosphoserine (serine 651). The span at 680–696 (KQKEKAASLKRDMPKVA) shows a compositional bias: basic and acidic residues. Positions 704–782 (VTVFVSNLPY…RPMFVSPCVD (79 aa)) constitute an RRM 1 domain. A phosphoserine mark is found at serine 795 and serine 852. The RRM 2 domain occupies 801-878 (HKLFISGLPF…NVIKVAISNP (78 aa)). Residues 880–962 (QRKVPEKPEV…ADFAKLLLRK (83 aa)) are disordered. Arginine 906 carries the omega-N-methylarginine modification.

Component of the 7SK snRNP complex at least composed of P-TEFb (composed of CDK9 and CCNT1/cyclin-T1), HEXIM1, HEXIM2, BCDIN3, SART3 proteins and 7SK and U6 snRNAs. Interacts with AGO1 and AGO2. Interacts with PRPF3 and USP4; the interaction with PRPF3 is direct and recruits USP4 to its substrate PRPF3. Interacts with USP15; the interaction is direct. In terms of tissue distribution, ubiquitously expressed, with low level of expression in liver, heart and skeletal. Also detected in hematopoietic cells (at protein level).

It localises to the nucleus. The protein resides in the nucleoplasm. The protein localises to the cajal body. It is found in the nucleus speckle. Its subcellular location is the cytoplasm. U6 snRNP-binding protein that functions as a recycling factor of the splicing machinery. Promotes the initial reassembly of U4 and U6 snRNPs following their ejection from the spliceosome during its maturation. Also binds U6atac snRNPs and may function as a recycling factor for U4atac/U6atac spliceosomal snRNP, an initial step in the assembly of U12-type spliceosomal complex. The U12-type spliceosomal complex plays a role in the splicing of introns with non-canonical splice sites. May also function as a substrate-targeting factor for deubiquitinases like USP4 and USP15. Recruits USP4 to ubiquitinated PRPF3 within the U4/U5/U6 tri-snRNP complex, promoting PRPF3 deubiquitination and thereby regulating the spliceosome U4/U5/U6 tri-snRNP spliceosomal complex disassembly. May also recruit the deubiquitinase USP15 to histone H2B and mediate histone deubiquitination, thereby regulating gene expression and/or DNA repair. May play a role in hematopoiesis probably through transcription regulation of specific genes including MYC. The polypeptide is Spliceosome associated factor 3, U4/U6 recycling protein (Mus musculus (Mouse)).